Here is a 420-residue protein sequence, read N- to C-terminus: Histidine--tRNA ligase (420 aa).

The protein belongs to the class-II aminoacyl-tRNA synthetase family. In terms of assembly, homodimer.

It localises to the cytoplasm. The catalysed reaction is tRNA(His) + L-histidine + ATP = L-histidyl-tRNA(His) + AMP + diphosphate + H(+). This chain is Histidine--tRNA ligase, found in Desulforudis audaxviator (strain MP104C).